The primary structure comprises 557 residues: MCSIAVHPTIQSVNLFEILQGKYAYVKGQTLYSSVRNSGTFFRQVFTNIYRDALSSCTYEDVLQDWIKYETSIRQRWKPSEKEDNAFKWSTFQSWFSTMKMTIDGIITKAITYIINTKCIASYERYIDWVATCGVVPVLNQRPNSKVVQMFKKHLEKEYSSVASSKSLTTIFHFLVESASSVLERLTSKFIPSYLEVSVTYDQYKCEYKASYQNKEIGVEVIIPPTIGSGKVVFNSPVQRLAENVMACHRTMEHAKICQLLNTGPLKAIVCSSSATVYKDILNHLDECGKKNDPKKELMQLLIKLAENKTVNGVTDVVEDFITDVSNKLVDRSKLFGDVNAEHPSDNLKKQVSNNVFKCLTQQINQQFETISKLEEERAFFLKKINQIETQLSKCQEEPQGTGGKPYNILTSSTLDALDGLSQSGLHLTSNQVTKGQSIVNSFFSQYVPPFRELQNDLHELWEHEIMQSFNLSPIIDNQGQRLFVRYTQDTIFFLLGPFTHNILGFVDMELLIEAYCTLSFYDIAEYLYSASRLAIYIVDIGQKYCSQPNLSDGSQS.

The protein belongs to the herpesviridae portal protein family. As to quaternary structure, homododecamerizes. Interacts with terminase subunits TRM1 and TRM3.

It is found in the virion. Its subcellular location is the host nucleus. In terms of biological role, forms a portal in the viral capsid through which viral DNA is translocated during DNA packaging. Assembles as a dodecamer at a single fivefold axe of the T=16 icosahedric capsid. Binds to the molecular motor that translocates the viral DNA, termed terminase. This is Portal protein (43) from Connochaetes taurinus (Blue wildebeest).